A 246-amino-acid polypeptide reads, in one-letter code: D-erythrulose reductase (246 aa).

13 to 41 (LVTGAGKGIGRAVAVALCKAGARVTALSR) is a binding site for NADP(+). Ser-138 lines the substrate pocket. The active-site Proton acceptor is Tyr-151. Lys-155 contacts NADP(+).

It belongs to the short-chain dehydrogenases/reductases (SDR) family. As to quaternary structure, homotetramer. Post-translationally, the N-terminus is blocked. Highly expressed in kidney, and also found in high amounts in liver and testis. Low expression seen in all other tissues tested.

It localises to the cytoplasm. It catalyses the reaction D-threitol + NADP(+) = D-erythrulose + NADPH + H(+). The enzyme catalyses xylitol + NADP(+) = L-xylulose + NADPH + H(+). Its function is as follows. Catalyzes the reduction of D-erythrulose to D-threitol with the concomitant oxidation of NAD(P)H to NAD(P)(+). NADH is less effective than NADPH. May also catalyze the reduction of L-xylulose. The polypeptide is D-erythrulose reductase (DER) (Gallus gallus (Chicken)).